The chain runs to 257 residues: UPF0246 protein RSKD131_2757 (257 aa).

The protein belongs to the UPF0246 family.

This Cereibacter sphaeroides (strain KD131 / KCTC 12085) (Rhodobacter sphaeroides) protein is UPF0246 protein RSKD131_2757.